The chain runs to 407 residues: Phosphopentomutase (407 aa).

Mn(2+)-binding residues include aspartate 10, aspartate 306, histidine 311, aspartate 347, histidine 348, and histidine 359.

The protein belongs to the phosphopentomutase family. Requires Mn(2+) as cofactor.

It is found in the cytoplasm. It catalyses the reaction 2-deoxy-alpha-D-ribose 1-phosphate = 2-deoxy-D-ribose 5-phosphate. The enzyme catalyses alpha-D-ribose 1-phosphate = D-ribose 5-phosphate. The protein operates within carbohydrate degradation; 2-deoxy-D-ribose 1-phosphate degradation; D-glyceraldehyde 3-phosphate and acetaldehyde from 2-deoxy-alpha-D-ribose 1-phosphate: step 1/2. In terms of biological role, isomerase that catalyzes the conversion of deoxy-ribose 1-phosphate (dRib-1-P) and ribose 1-phosphate (Rib-1-P) to deoxy-ribose 5-phosphate (dRib-5-P) and ribose 5-phosphate (Rib-5-P), respectively. The chain is Phosphopentomutase from Yersinia enterocolitica serotype O:8 / biotype 1B (strain NCTC 13174 / 8081).